The following is a 433-amino-acid chain: Succinate--CoA ligase [GDP-forming] subunit beta, mitochondrial (433 aa).

The N-terminal 38 residues, 1–38 (IPAAPVAAQARKLLRDLAFRPPLLAARSQVVQLTPRRW), are a transit peptide targeting the mitochondrion. The 229-residue stretch at 47-275 (KKLMSDNGVK…NAEFRQKDIF (229 aa)) folds into the ATP-grasp domain. GTP is bound at residue Gln-58. Lys-74 is modified (N6-acetyllysine). N6-succinyllysine is present on Lys-79. Residue 91–93 (GRG) participates in GTP binding. 2 positions are modified to N6-acetyllysine: Lys-133 and Lys-140. GTP is bound at residue Leu-147. The residue at position 162 (Ser-162) is a Phosphoserine. 2 positions are modified to N6-acetyllysine: Lys-201 and Lys-228. Asn-244 and Asp-258 together coordinate Mg(2+). N6-acetyllysine occurs at positions 272 and 292. Asn-309 provides a ligand contact to substrate. Lys-339 bears the N6-succinyllysine mark. Lys-348 is modified (N6-acetyllysine). Residue 366–368 (GIV) participates in substrate binding. N6-acetyllysine is present on residues Lys-387 and Lys-424.

This sequence belongs to the succinate/malate CoA ligase beta subunit family. GTP-specific subunit beta subfamily. As to quaternary structure, heterodimer of an alpha and a beta subunit. The beta subunit determines specificity for GTP. Mg(2+) serves as cofactor.

It is found in the mitochondrion. It carries out the reaction GTP + succinate + CoA = succinyl-CoA + GDP + phosphate. It participates in carbohydrate metabolism; tricarboxylic acid cycle; succinate from succinyl-CoA (ligase route): step 1/1. Functionally, GTP-specific succinyl-CoA synthetase functions in the citric acid cycle (TCA), coupling the hydrolysis of succinyl-CoA to the synthesis of GTP and thus represents the only step of substrate-level phosphorylation in the TCA. The beta subunit provides nucleotide specificity of the enzyme and binds the substrate succinate, while the binding sites for coenzyme A and phosphate are found in the alpha subunit. The sequence is that of Succinate--CoA ligase [GDP-forming] subunit beta, mitochondrial from Sus scrofa (Pig).